The sequence spans 278 residues: 3-methyl-2-oxobutanoate hydroxymethyltransferase 1 (278 aa).

Positions 49 and 88 each coordinate Mg(2+). 3-methyl-2-oxobutanoate is bound by residues 49–50, Asp88, and Lys118; that span reads DS. Glu120 provides a ligand contact to Mg(2+). Glu187 acts as the Proton acceptor in catalysis.

The protein belongs to the PanB family. As to quaternary structure, homodecamer; pentamer of dimers. The cofactor is Mg(2+).

It localises to the cytoplasm. It catalyses the reaction 3-methyl-2-oxobutanoate + (6R)-5,10-methylene-5,6,7,8-tetrahydrofolate + H2O = 2-dehydropantoate + (6S)-5,6,7,8-tetrahydrofolate. It participates in cofactor biosynthesis; (R)-pantothenate biosynthesis; (R)-pantoate from 3-methyl-2-oxobutanoate: step 1/2. In terms of biological role, catalyzes the reversible reaction in which hydroxymethyl group from 5,10-methylenetetrahydrofolate is transferred onto alpha-ketoisovalerate to form ketopantoate. In Hahella chejuensis (strain KCTC 2396), this protein is 3-methyl-2-oxobutanoate hydroxymethyltransferase 1.